Consider the following 260-residue polypeptide: Putative ATP-binding protein BruAb2_1123 (260 aa).

Positions 5-228 constitute an ABC transporter domain; that stretch reads ISFNNVVMRY…DLPYPRTEAI (224 aa). Residue 37–44 participates in ATP binding; it reads GPSGCGKS.

This sequence belongs to the ABC transporter superfamily. As to quaternary structure, the complex is composed of two ATP-binding proteins (BruAb2_1123), two transmembrane proteins (BruAb2_1124) and a solute-binding protein (BruAb2_1122).

It localises to the cell inner membrane. Functionally, probably part of an ABC transporter complex. Probably Responsible for energy coupling to the transport system. The sequence is that of Putative ATP-binding protein BruAb2_1123 from Brucella abortus biovar 1 (strain 9-941).